A 322-amino-acid chain; its full sequence is Sulfate adenylyltransferase subunit 2 (322 aa).

This sequence belongs to the PAPS reductase family. CysD subfamily. As to quaternary structure, heterodimer composed of CysD, the smaller subunit, and CysN.

The enzyme catalyses sulfate + ATP + H(+) = adenosine 5'-phosphosulfate + diphosphate. It functions in the pathway sulfur metabolism; hydrogen sulfide biosynthesis; sulfite from sulfate: step 1/3. Its function is as follows. With CysN forms the ATP sulfurylase (ATPS) that catalyzes the adenylation of sulfate producing adenosine 5'-phosphosulfate (APS) and diphosphate, the first enzymatic step in sulfur assimilation pathway. APS synthesis involves the formation of a high-energy phosphoric-sulfuric acid anhydride bond driven by GTP hydrolysis by CysN coupled to ATP hydrolysis by CysD. In Bradyrhizobium sp. (strain BTAi1 / ATCC BAA-1182), this protein is Sulfate adenylyltransferase subunit 2.